Reading from the N-terminus, the 335-residue chain is Biotin synthase (335 aa).

The Radical SAM core domain occupies 51–278; that stretch reads NTVQLSSLLS…LAKVRLSAGR (228 aa). [4Fe-4S] cluster contacts are provided by C66, C70, and C73. The [2Fe-2S] cluster site is built by C110, C141, C201, and R273.

Belongs to the radical SAM superfamily. Biotin synthase family. In terms of assembly, homodimer. [4Fe-4S] cluster is required as a cofactor. Requires [2Fe-2S] cluster as cofactor.

It carries out the reaction (4R,5S)-dethiobiotin + (sulfur carrier)-SH + 2 reduced [2Fe-2S]-[ferredoxin] + 2 S-adenosyl-L-methionine = (sulfur carrier)-H + biotin + 2 5'-deoxyadenosine + 2 L-methionine + 2 oxidized [2Fe-2S]-[ferredoxin]. The protein operates within cofactor biosynthesis; biotin biosynthesis; biotin from 7,8-diaminononanoate: step 2/2. Functionally, catalyzes the conversion of dethiobiotin (DTB) to biotin by the insertion of a sulfur atom into dethiobiotin via a radical-based mechanism. In Bordetella bronchiseptica (strain ATCC BAA-588 / NCTC 13252 / RB50) (Alcaligenes bronchisepticus), this protein is Biotin synthase.